The following is a 217-amino-acid chain: Ribosome maturation factor RimM (217 aa).

One can recognise a PRC barrel domain in the interval E115–L186. A disordered region spans residues T181–E217.

The protein belongs to the RimM family. In terms of assembly, binds ribosomal protein uS19.

It localises to the cytoplasm. An accessory protein needed during the final step in the assembly of 30S ribosomal subunit, possibly for assembly of the head region. Essential for efficient processing of 16S rRNA. May be needed both before and after RbfA during the maturation of 16S rRNA. It has affinity for free ribosomal 30S subunits but not for 70S ribosomes. This Leifsonia xyli subsp. xyli (strain CTCB07) protein is Ribosome maturation factor RimM.